The primary structure comprises 310 residues: Thioesterase pytI (310 aa).

A run of 2 helical transmembrane segments spans residues 14–34 (SLTP…YFAL) and 95–115 (LLGG…IFVA). Positions 168–195 (TLSDDASTTTSSDNSRASTDHGADSEVE) are disordered. Low complexity predominate over residues 170–184 (SDDASTTTSSDNSRA).

The protein belongs to the AMT4 thioesterase family.

The protein resides in the membrane. Its pathway is secondary metabolite biosynthesis. Thioesterase; part of the gene cluster that mediates the biosynthesis of pyranterreones, a family of antioxidative compounds. The first step of pyranonigrins biosynthesis is performed by the hybrid PKS-NRPS synthetase pytA that condenses 4 malonyl-CoA units ato the acetyl starter unit by the modular PKS of pytA. The acyl chain is then connected to an L-serine through the amide bond by the modular NRPS of pytA. A tetramic acid is formed and released from the PKS-NRPS pytA to give pyranterreone 5 with the help of the thioesterase pytI. Pyranterreone 5 could be methylated by pytC to afford pyranterreone 6. Both pyranterreones 5 and 6 are subsequently oxidized by the FAD-linked oxidoreductase pytB and the cytochrome P450 monooxygenase pytD to form the fused gamma-pyrone core, resulting in pyranterreones 7 and 11, respectively. The hydroxy group at C-8 of pyranterreones 7 and 11 are dehydrated by the aspartyl protease pytH to form a delta-7 double bond to give pyranterreones 3 and 1, 2 accordingly. The exo-methylene of pyranterreone 3 could be reduced into a pendant methyl by reductase pytE to provide pyranterreone 4, also known as cordylactam. Pyranterreone 4 can be reconverted to pyranterreone 3 through pytB-catalyzed dehydrogenation or further oxidized to pyranterreones 9 and 10. This is Thioesterase pytI from Aspergillus terreus.